Reading from the N-terminus, the 258-residue chain is Chymotrypsin-like elastase family member 1 (258 aa).

The N-terminal stretch at 1 to 8 (MLVLYGHS) is a signal peptide. The propeptide at 9–18 (TQDVPETNAR) is activation peptide. A Peptidase S1 domain is found at 19-256 (VVGGTEARRN…YITWINNVIA (238 aa)). Cysteine 48 and cysteine 64 are oxidised to a cystine. The active-site Charge relay system is the histidine 63. Residues glutamate 77, asparagine 79, glutamine 82, and glutamate 87 each contribute to the Ca(2+) site. The N-linked (GlcNAc...) asparagine glycan is linked to asparagine 79. Aspartate 111 functions as the Charge relay system in the catalytic mechanism. 3 cysteine pairs are disulfide-bonded: cysteine 145-cysteine 212, cysteine 176-cysteine 192, and cysteine 202-cysteine 232. Serine 206 functions as the Charge relay system in the catalytic mechanism. Asparagine 233 carries an N-linked (GlcNAc...) asparagine glycan.

The protein belongs to the peptidase S1 family. Elastase subfamily. It depends on Ca(2+) as a cofactor.

Its subcellular location is the secreted. The catalysed reaction is Hydrolysis of proteins, including elastin. Preferential cleavage: Ala-|-Xaa.. In terms of biological role, serine proteases that hydrolyze many proteins in addition to elastin. The polypeptide is Chymotrypsin-like elastase family member 1 (CELA1) (Canis lupus familiaris (Dog)).